A 718-amino-acid chain; its full sequence is Auxin response factor 2 (718 aa).

The segment at 1–24 (MVGIDLNTVEEEEDEEEGGATGTV) is disordered. Residues 8–18 (TVEEEEDEEEG) show a composition bias toward acidic residues. A DNA-binding region (TF-B3) is located at residues 147 to 249 (FCKTLTASDT…ELRLGVRRAA (103 aa)).

The protein belongs to the ARF family. In terms of assembly, homo and heterodimers. Expressed in roots, culms, leaves and young panicles.

It is found in the nucleus. In terms of biological role, auxin response factors (ARFs) are transcriptional factors that bind specifically to the DNA sequence 5'-TGTCTC-3' found in the auxin-responsive promoter elements (AuxREs). The chain is Auxin response factor 2 (ARF2) from Oryza sativa subsp. japonica (Rice).